The primary structure comprises 33 residues: GFFALIPKIISSPLFKTLLSAVGSALSSSGDQE.

The protein belongs to the pardaxin family. In terms of assembly, monomer. In aqueous solution exists as a tetramer.

Its subcellular location is the secreted. It is found in the target cell membrane. In terms of biological role, exhibits unusual shark repellent and surfactant properties. Forms voltage-dependent, ion-permeable channels in membranes. At high concentration causes cell membrane lysis. The protein is Pardaxin P-5 of Pardachirus marmoratus (Finless sole).